The chain runs to 301 residues: Pseudouridine-5'-phosphate glycosidase (301 aa).

Residue glutamate 23 is the Proton donor of the active site. Substrate-binding residues include lysine 84 and valine 104. Position 136 (aspartate 136) interacts with Mn(2+). 138–140 is a binding site for substrate; that stretch reads SRD. Catalysis depends on lysine 157, which acts as the Nucleophile.

This sequence belongs to the pseudouridine-5'-phosphate glycosidase family. Homotrimer. It depends on Mn(2+) as a cofactor.

The enzyme catalyses D-ribose 5-phosphate + uracil = psi-UMP + H2O. In terms of biological role, catalyzes the reversible cleavage of pseudouridine 5'-phosphate (PsiMP) to ribose 5-phosphate and uracil. Functions biologically in the cleavage direction, as part of a pseudouridine degradation pathway. In Mycoplasmopsis agalactiae (strain NCTC 10123 / CIP 59.7 / PG2) (Mycoplasma agalactiae), this protein is Pseudouridine-5'-phosphate glycosidase.